Here is a 238-residue protein sequence, read N- to C-terminus: Splicing regulator RBM11 (238 aa).

Residues R10–G87 form the RRM domain. A disordered region spans residues A172–Y238. The Bipartite nuclear localization signal signature appears at N202–R237. Basic residues predominate over residues K228 to Y238.

In terms of assembly, homodimer. In terms of tissue distribution, selectively expressed in brain, cerebellum and testis, and to a lower extent in kidney.

It localises to the nucleus. Its subcellular location is the nucleoplasm. The protein localises to the nucleus speckle. Its function is as follows. Tissue-specific splicing factor with potential implication in the regulation of alternative splicing during neuron and germ cell differentiation. Antagonizes SRSF1-mediated BCL-X splicing. May affect the choice of alternative 5' splice sites by binding to specific sequences in exons and antagonizing the SR protein SRSF1. The chain is Splicing regulator RBM11 (Rbm11) from Mus musculus (Mouse).